We begin with the raw amino-acid sequence, 161 residues long: Allophycocyanin subunit alpha-B (161 aa).

Residue asparagine 71 is modified to N4-methylasparagine. Cysteine 81 provides a ligand contact to (2R,3E)-phycocyanobilin.

Belongs to the phycobiliprotein family. In terms of assembly, heterodimer of an alpha-B and a beta chain forming AP-B. In terms of processing, contains one covalently linked bilin chromophore. The chromophore is added by phycocyanobilin lyase CpcUS.

It localises to the cellular thylakoid membrane. A variant alpha-allophycocyanin (AP) which forms a complex with beta-AP with maximum absorption at approximately 670 nanometers. It is an important phycobilisome terminal emitter involved in energy transfer to photosystem I. This Picosynechococcus sp. (strain ATCC 27264 / PCC 7002 / PR-6) (Agmenellum quadruplicatum) protein is Allophycocyanin subunit alpha-B (apcD).